The sequence spans 120 residues: NAD(P)H-quinone oxidoreductase subunit 3 (120 aa).

A run of 3 helical transmembrane segments spans residues 10 to 30 (FLGFLIIAAAVPILALVTNLI), 64 to 84 (MFALVFVIFDVETVFLYPWAV), and 89 to 109 (LGLLAFIEALIFITILVIALA).

The protein belongs to the complex I subunit 3 family. In terms of assembly, NDH-1 can be composed of about 15 different subunits; different subcomplexes with different compositions have been identified which probably have different functions.

It localises to the cellular thylakoid membrane. The catalysed reaction is a plastoquinone + NADH + (n+1) H(+)(in) = a plastoquinol + NAD(+) + n H(+)(out). The enzyme catalyses a plastoquinone + NADPH + (n+1) H(+)(in) = a plastoquinol + NADP(+) + n H(+)(out). In terms of biological role, NDH-1 shuttles electrons from an unknown electron donor, via FMN and iron-sulfur (Fe-S) centers, to quinones in the respiratory and/or the photosynthetic chain. The immediate electron acceptor for the enzyme in this species is believed to be plastoquinone. Couples the redox reaction to proton translocation, and thus conserves the redox energy in a proton gradient. Cyanobacterial NDH-1 also plays a role in inorganic carbon-concentration. In Prochlorococcus marinus subsp. pastoris (strain CCMP1986 / NIES-2087 / MED4), this protein is NAD(P)H-quinone oxidoreductase subunit 3.